The primary structure comprises 232 residues: Non-structural maintenance of chromosomes element 1 (232 aa).

Residues 181 to 222 (LYECNACREIVIAGYVCDCGYCLHVYCCKHLAHVNCINCNTP) form an RING-type; atypical zinc finger.

This sequence belongs to the NSE1 family. Two subcomplexes smc5-smc6-nse2 and nse1-nse3-nse4 exist. These subcomplexes are then brought together via a number of interactions, forming the Smc5-Smc6 complex.

The protein resides in the nucleus. It carries out the reaction S-ubiquitinyl-[E2 ubiquitin-conjugating enzyme]-L-cysteine + [acceptor protein]-L-lysine = [E2 ubiquitin-conjugating enzyme]-L-cysteine + N(6)-ubiquitinyl-[acceptor protein]-L-lysine.. Its function is as follows. Acts in a DNA repair pathway for removal of UV-induced DNA damage that is distinct from classical nucleotide excision repair and in repair of ionizing radiation damage. Functions in homologous recombination repair of DNA double strand breaks and in recovery of stalled replication forks. Plays a critical role in meiosis. In Schizosaccharomyces pombe (strain 972 / ATCC 24843) (Fission yeast), this protein is Non-structural maintenance of chromosomes element 1 (nse1).